A 96-amino-acid chain; its full sequence is Co-chaperonin GroES (96 aa).

Belongs to the GroES chaperonin family. As to quaternary structure, heptamer of 7 subunits arranged in a ring. Interacts with the chaperonin GroEL.

The protein resides in the cytoplasm. Functionally, together with the chaperonin GroEL, plays an essential role in assisting protein folding. The GroEL-GroES system forms a nano-cage that allows encapsulation of the non-native substrate proteins and provides a physical environment optimized to promote and accelerate protein folding. GroES binds to the apical surface of the GroEL ring, thereby capping the opening of the GroEL channel. In Idiomarina loihiensis (strain ATCC BAA-735 / DSM 15497 / L2-TR), this protein is Co-chaperonin GroES.